The following is a 322-amino-acid chain: MAKALHITIFLFLISSNLLAFINSARLLDEIQPQPQLVPTGQIPTVAPTEAEEEDGTDDNPGLATTTTTASAVTVPAGPAEATEPLLEFFMHDVLGGSHPSARVVTGIVAQTEVNGIPFSKASNSIFPVDNGVPLVNSNNINSVINPNTAPLLTGLGGAQTSTVIQNTNGNSNDALSANSLPFVTAGNLPPGAALQHLMFGTITVVDDELTESHELGSAVIGRAQGFYLASSLDGTSQTLSLTVLLHGEHDQHDTLDDAISFFGVHRTASHASQIAVIGGTGKFEHAKGYAIVETLHNQDNQHITDGQDTILHFSVYLTYKA.

An N-terminal signal peptide occupies residues 1-20; sequence MAKALHITIFLFLISSNLLA.

This sequence belongs to the plant dirigent protein family. Homodimer.

The protein localises to the secreted. Its subcellular location is the extracellular space. The protein resides in the apoplast. Its function is as follows. Dirigent proteins impart stereoselectivity on the phenoxy radical-coupling reaction, yielding optically active lignans from two molecules of coniferyl alcohol in the biosynthesis of lignans, flavonolignans, and alkaloids and thus plays a central role in plant secondary metabolism. The protein is Dirigent protein 9 (DIR9) of Arabidopsis thaliana (Mouse-ear cress).